Reading from the N-terminus, the 121-residue chain is Large ribosomal subunit protein uL22 (121 aa).

It belongs to the universal ribosomal protein uL22 family. As to quaternary structure, part of the 50S ribosomal subunit.

This protein binds specifically to 23S rRNA; its binding is stimulated by other ribosomal proteins, e.g. L4, L17, and L20. It is important during the early stages of 50S assembly. It makes multiple contacts with different domains of the 23S rRNA in the assembled 50S subunit and ribosome. Functionally, the globular domain of the protein is located near the polypeptide exit tunnel on the outside of the subunit, while an extended beta-hairpin is found that lines the wall of the exit tunnel in the center of the 70S ribosome. The polypeptide is Large ribosomal subunit protein uL22 (Paenarthrobacter aurescens (strain TC1)).